Here is a 358-residue protein sequence, read N- to C-terminus: Protein-L-isoaspartate O-methyltransferase domain-containing protein 1 (358 aa).

The N-myristoyl glycine moiety is linked to residue Gly-2. Ser-64 is an active-site residue. AdoMet binding motif stretches follow at residues 85-94, 160-164, and 181-191; these read LNLGSGTGYL, YDRIY, and LKVGGILVMPI. A BC-box region spans residues 240–250; that stretch reads VRNLQDLARIY. The disordered stretch occupies residues 300–339; it reads PLDSEEDERMEDDNKEEEDKDHSEALKPEEPPRNLLREKI. Residues 302-318 show a composition bias toward acidic residues; the sequence is DSEEDERMEDDNKEEED. Over residues 319–339 the composition is skewed to basic and acidic residues; that stretch reads KDHSEALKPEEPPRNLLREKI. The interval 342–345 is CUL-box; sequence LPLP.

The protein belongs to the methyltransferase superfamily. L-isoaspartyl/D-aspartyl protein methyltransferase family. In terms of assembly, component of the probable ECS(PCMTD1) E3 ubiquitin-protein ligase complex, at least composed of CUL5, ELOB, ELOC, RBX2 and PCMTD1.

The protein localises to the cytoplasm. It localises to the membrane. Its function is as follows. Substrate recognition component of an ECS (Elongin BC-CUL5-SOCS-box protein) E3 ubiquitin ligase complex which mediates the ubiquitination and subsequent proteasomal degradation of target proteins. Specifically binds to the methyltransferase cofactor S-adenosylmethionine (AdoMet) via the N-terminal AdoMet binding motif, but does not display methyltransferase activity. May provide an alternate maintenance pathway for modified proteins by acting as a damage-specific E3 ubiquitin ligase adaptor protein. The protein is Protein-L-isoaspartate O-methyltransferase domain-containing protein 1 (PCMTD1) of Gallus gallus (Chicken).